A 402-amino-acid chain; its full sequence is Triose phosphate/phosphate translocator, non-green plastid, chloroplastic (402 aa).

The transit peptide at 1–82 (MQSSAVFSAS…SLDTNRFKTA (82 aa)) directs the protein to the chloroplast. The Chloroplast intermembrane segment spans residues 83–98 (ATAVPEEGEGSGKMTK). A helical transmembrane segment spans residues 99–119 (VLELGLLFAMWYLFNIYFNIY). The region spanning 118–236 (IYNKQVLKAL…IVGGVALASV (119 aa)) is the EamA domain. Residues 120–131 (NKQVLKALHAPM) are Lumenal-facing. A helical membrane pass occupies residues 132–152 (TVTLVQFAVGSVLITFMWALN). The Chloroplast intermembrane segment spans residues 153 to 209 (LYKRPKISAAQLAAILPLAVVHTLGNLFTNMSLGKVSVSFTHTIKAMEPFFSVVLSA). The chain crosses the membrane as a helical span at residues 210–230 (MFLGEVPTPWVIGSIIPIVGG). Over 231–278 (VALASVTEVSFNWAGFLSAMASNLTNQSRNVLSKKVMVKKDDSLDNIT) the chain is Lumenal. Residues 279–298 (LFSIITLMSLFLMAPVTFFS) form a helical membrane-spanning segment. Over 299–374 (EGIKFTPSYI…IFFKTPVSPV (76 aa)) the chain is Chloroplast intermembrane. The chain crosses the membrane as a helical span at residues 375–394 (NAFGTGIALAGVFLYSRVKR). Residues 395-402 (IKPKPKTA) are Lumenal-facing.

This sequence belongs to the TPT transporter family. TPT (TC 2.A.7.9) subfamily. In terms of assembly, homodimer.

It localises to the plastid. The protein localises to the chloroplast membrane. Functionally, mediates the export of fixed carbons from the chloroplasts into the cytosol in the form of triose phosphates. In Brassica oleracea var. botrytis (Cauliflower), this protein is Triose phosphate/phosphate translocator, non-green plastid, chloroplastic (NGTPT).